A 201-amino-acid chain; its full sequence is Large ribosomal subunit protein uL4 (201 aa).

The interval 45-71 is disordered; sequence AQKTRAEVTGSGKKPWRQKGTGRARAG.

The protein belongs to the universal ribosomal protein uL4 family. In terms of assembly, part of the 50S ribosomal subunit.

In terms of biological role, one of the primary rRNA binding proteins, this protein initially binds near the 5'-end of the 23S rRNA. It is important during the early stages of 50S assembly. It makes multiple contacts with different domains of the 23S rRNA in the assembled 50S subunit and ribosome. Its function is as follows. Forms part of the polypeptide exit tunnel. The chain is Large ribosomal subunit protein uL4 from Shewanella halifaxensis (strain HAW-EB4).